A 197-amino-acid chain; its full sequence is Putative ankyrin repeat protein R875 (197 aa).

ANK repeat units lie at residues 78–106, 107–136, 138–166, and 168–196; these read LNKC…DIRE, NDDC…DIRA, DDDA…NFRK, and NDYE…VLHE.

The polypeptide is Putative ankyrin repeat protein R875 (Acanthamoeba polyphaga mimivirus (APMV)).